The following is a 298-amino-acid chain: GTPase Era (298 aa).

Residues 8–176 enclose the Era-type G domain; the sequence is RCGRIAVIGR…VSDLLALLPE (169 aa). Positions 16 to 23 are G1; it reads GRPNVGKS. 16–23 is a binding site for GTP; that stretch reads GRPNVGKS. The G2 stretch occupies residues 42–46; sequence QTTRH. The G3 stretch occupies residues 63-66; that stretch reads DTPG. GTP contacts are provided by residues 63 to 67 and 125 to 128; these read DTPGL and NKID. The interval 125 to 128 is G4; sequence NKID. Residues 155-157 form a G5 region; that stretch reads VSA. A KH type-2 domain is found at 199–283; sequence VREQVMRQLG…FLETWVRVRK (85 aa).

This sequence belongs to the TRAFAC class TrmE-Era-EngA-EngB-Septin-like GTPase superfamily. Era GTPase family. As to quaternary structure, monomer.

The protein resides in the cytoplasm. Its subcellular location is the cell inner membrane. Its function is as follows. An essential GTPase that binds both GDP and GTP, with rapid nucleotide exchange. Plays a role in 16S rRNA processing and 30S ribosomal subunit biogenesis and possibly also in cell cycle regulation and energy metabolism. The polypeptide is GTPase Era (Xylella fastidiosa (strain M12)).